The sequence spans 117 residues: Large ribosomal subunit protein bL20 (117 aa).

It belongs to the bacterial ribosomal protein bL20 family.

Binds directly to 23S ribosomal RNA and is necessary for the in vitro assembly process of the 50S ribosomal subunit. It is not involved in the protein synthesizing functions of that subunit. In Wigglesworthia glossinidia brevipalpis, this protein is Large ribosomal subunit protein bL20.